A 283-amino-acid chain; its full sequence is Probable endonuclease 4 (283 aa).

Residues His66, His106, Glu141, Asp174, His177, His211, Asp224, His226, and Glu256 each coordinate Zn(2+).

The protein belongs to the AP endonuclease 2 family. It depends on Zn(2+) as a cofactor.

It catalyses the reaction Endonucleolytic cleavage to 5'-phosphooligonucleotide end-products.. Functionally, endonuclease IV plays a role in DNA repair. It cleaves phosphodiester bonds at apurinic or apyrimidinic (AP) sites, generating a 3'-hydroxyl group and a 5'-terminal sugar phosphate. This is Probable endonuclease 4 from Carboxydothermus hydrogenoformans (strain ATCC BAA-161 / DSM 6008 / Z-2901).